Here is a 507-residue protein sequence, read N- to C-terminus: Phosphoprotein (507 aa).

Positions 56–79 (DHQDISKPCFPAAGPGKSSMSRCH) are disordered. A phosphoserine mark is found at S86 and S151. Residues 137 to 160 (DGVEVWGGDEESENSDVDSGEPDP) show a composition bias toward acidic residues. The segment at 137–307 (DGVEVWGGDE…QSNIEPEDDY (171 aa)) is disordered. 2 stretches are compositionally biased toward basic and acidic residues: residues 189 to 199 (EIQKLLEDQSR) and 222 to 233 (TASEKPIKKGTD). 2 stretches are compositionally biased toward low complexity: residues 236–252 (STSS…GGAT) and 266–278 (NASA…SASN). Residues 279–301 (VSPTQGSKTESGTTTSRISQSNI) are compositionally biased toward polar residues. The interval 304–376 (EDDYDDELFS…LSSFMIAIPG (73 aa)) is multimerization. The interval 459-507 (ASRSVIRSIIKSSHLGEDRKDYLMSLLNDIQGSKDLAQFHQMLVKILKN) is interaction with the nucleocapsid (N-RNA).

This sequence belongs to the morbillivirus P protein family. Homotetramer. Interacts (via multimerization domain) with polymerase L; this interaction forms the polymerase L-P complex. Interacts (via N-terminus) with N0 (via Ncore); this interaction allows P to chaperon N0 to avoid N polymerization before encapsidation. Interacts (via C-terminus) with N-RNA template; this interaction positions the polymerase on the template for both transcription and replication. Post-translationally, phosphorylation on serines by host CK2 is necessary for the formation of viral factories.

Its function is as follows. Essential cofactor of the RNA polymerase L that plays a central role in the transcription and replication by forming the polymerase complex with RNA polymerase L and recruiting L to the genomic N-RNA template for RNA synthesis. Also plays a central role in the encapsidation of nascent RNA chains by forming the encapsidation complex with the nucleocapsid protein N (N-P complex). Acts as a chaperone for newly synthesized free N protein, so-called N0, allowing encapsidation of nascent RNA chains during replication. The nucleoprotein protein N prevents excessive phosphorylation of P, which leads to down-regulation of viral transcription/ replication. Participates, together with N, in the formation of viral factories (viroplasms), which are large inclusions in the host cytoplasm where replication takes place. The sequence is that of Phosphoprotein (P/V) from Bos indicus (Zebu).